The following is a 232-amino-acid chain: Rho-related GTP-binding protein Rho6 (232 aa).

Residues 23–28 (QCGKTA), 38–45 (YPETYVPT), 67–71 (DTSGS), 125–128 (CKTD), and 169–170 (AF) each bind GTP. Positions 42-50 (YVPTVFENY) match the Effector region motif. Position 229 is a cysteine methyl ester (Cys229). A lipid anchor (S-geranylgeranyl cysteine) is attached at Cys229. A propeptide spans 230–232 (SIM) (removed in mature form).

This sequence belongs to the small GTPase superfamily. Rho family. Binds GRB7 and PLXNB1. Interacts with PLXNA2. Interacts with UBXD5.

It is found in the cell membrane. Its subcellular location is the cytoplasm. The protein localises to the cytoskeleton. Functionally, lacks intrinsic GTPase activity. Has a low affinity for GDP, and constitutively binds GTP. Controls rearrangements of the actin cytoskeleton. Induces the Rac-dependent neuritic process formation in part by disruption of the cortical actin filaments. Causes the formation of many neuritic processes from the cell body with disruption of the cortical actin filaments. The polypeptide is Rho-related GTP-binding protein Rho6 (Rnd1) (Mus musculus (Mouse)).